The primary structure comprises 110 residues: METQAKLRFSRVSPQKARLVADQIRGLPVDDALRTLEYSPRKAAEIVRKVLESAVANAEHNDGADVDELRVARIFVDEGPTMKRIQPRAKGRANRILKRTSHITVAVAED.

Belongs to the universal ribosomal protein uL22 family. As to quaternary structure, part of the 50S ribosomal subunit.

In terms of biological role, this protein binds specifically to 23S rRNA; its binding is stimulated by other ribosomal proteins, e.g. L4, L17, and L20. It is important during the early stages of 50S assembly. It makes multiple contacts with different domains of the 23S rRNA in the assembled 50S subunit and ribosome. The globular domain of the protein is located near the polypeptide exit tunnel on the outside of the subunit, while an extended beta-hairpin is found that lines the wall of the exit tunnel in the center of the 70S ribosome. The polypeptide is Large ribosomal subunit protein uL22 (Halorhodospira halophila (strain DSM 244 / SL1) (Ectothiorhodospira halophila (strain DSM 244 / SL1))).